The primary structure comprises 103 residues: Histone H4 (103 aa).

Gly residues predominate over residues 1-14 (MSGRGKGGKGLGKG). The disordered stretch occupies residues 1–20 (MSGRGKGGKGLGKGGAKRHR). N-acetylserine is present on Ser2. Lys17 is modified (N6-acetyllysine). The DNA-binding element occupies 17–21 (KRHRK). Lys21 is modified (N6-methyllysine).

Belongs to the histone H4 family. The nucleosome is a histone octamer containing two molecules each of H2A, H2B, H3 and H4 assembled in one H3-H4 heterotetramer and two H2A-H2B heterodimers. The octamer wraps approximately 147 bp of DNA.

The protein resides in the nucleus. Its subcellular location is the chromosome. Core component of nucleosome. Nucleosomes wrap and compact DNA into chromatin, limiting DNA accessibility to the cellular machineries which require DNA as a template. Histones thereby play a central role in transcription regulation, DNA repair, DNA replication and chromosomal stability. DNA accessibility is regulated via a complex set of post-translational modifications of histones, also called histone code, and nucleosome remodeling. The chain is Histone H4 from Pyrenomonas salina.